The following is a 132-amino-acid chain: Photosystem II extrinsic protein U (132 aa).

The first 29 residues, 1-29, serve as a signal peptide directing secretion; sequence MKRLLSWLTGALVMAGLLSSLVLPSAVYA.

Belongs to the PsbU family. PSII is composed of 1 copy each of membrane proteins PsbA, PsbB, PsbC, PsbD, PsbE, PsbF, PsbH, PsbI, PsbJ, PsbK, PsbL, PsbM, PsbT, PsbX, PsbY, PsbZ, Psb30/Ycf12, peripheral proteins PsbO, CyanoQ (PsbQ), PsbU, PsbV and a large number of cofactors. It forms dimeric complexes.

The protein localises to the cellular thylakoid membrane. Functionally, one of the extrinsic, lumenal subunits of photosystem II (PSII). PSII is a light-driven water plastoquinone oxidoreductase, using light energy to abstract electrons from H(2)O, generating a proton gradient subsequently used for ATP formation. The extrinsic proteins stabilize the structure of photosystem II oxygen-evolving complex (OEC), the ion environment of oxygen evolution and protect the OEC against heat-induced inactivation. This is Photosystem II extrinsic protein U from Synechococcus sp. (strain CC9902).